The chain runs to 187 residues: Elongation factor P (187 aa).

This sequence belongs to the elongation factor P family.

It is found in the cytoplasm. It participates in protein biosynthesis; polypeptide chain elongation. Its function is as follows. Involved in peptide bond synthesis. Stimulates efficient translation and peptide-bond synthesis on native or reconstituted 70S ribosomes in vitro. Probably functions indirectly by altering the affinity of the ribosome for aminoacyl-tRNA, thus increasing their reactivity as acceptors for peptidyl transferase. The sequence is that of Elongation factor P from Roseiflexus castenholzii (strain DSM 13941 / HLO8).